The primary structure comprises 395 residues: Protein RIF2 (395 aa).

In terms of assembly, interacts with RIF1 and RAP1 C-terminus.

The protein localises to the nucleus. Its subcellular location is the chromosome. It is found in the telomere. Involved in transcriptional silencing and telomere length regulation. Its role in telomere length regulation results from either a block in elongation or promoting degradation of the telomere ends. Loss of RIF1 function results in derepression of an HMR silencer, whose ARS consensus element has been deleted, and in the elongation of telomeres. RAP1 may target the binding of RIF1 to silencers and telomeres. In Saccharomyces cerevisiae (strain ATCC 204508 / S288c) (Baker's yeast), this protein is Protein RIF2 (RIF2).